A 359-amino-acid chain; its full sequence is Uracil-DNA glycosylase (359 aa).

The transit peptide at 1–21 directs the protein to the mitochondrion; it reads MWCMRRLPTNSVMTVARKRKQ. Aspartate 162 (proton acceptor) is an active-site residue.

This sequence belongs to the uracil-DNA glycosylase (UDG) superfamily. UNG family.

It is found in the mitochondrion. The protein resides in the nucleus. It catalyses the reaction Hydrolyzes single-stranded DNA or mismatched double-stranded DNA and polynucleotides, releasing free uracil.. Its function is as follows. Excises uracil residues from the DNA which can arise as a result of misincorporation of dUMP residues by DNA polymerase or due to deamination of cytosine. Not involved in strand-directed mismatch repair. The sequence is that of Uracil-DNA glycosylase from Saccharomyces cerevisiae (strain ATCC 204508 / S288c) (Baker's yeast).